The chain runs to 2793 residues: Iterative polyketide synthase afoE (2793 aa).

Positions 1 to 401 are N-terminal acylcarrier protein transacylase domain (SAT); sequence MTRASASGSG…PEKPSFWLTP (401 aa). Residue C157 is the Nucleophile; for transacylase activity of the active site. H279 serves as the catalytic Proton donor/acceptor; for transacylase activity. The Ketosynthase family 3 (KS3) domain maps to 435–862; sequence SEPIAIVGMS…GSNASMIVTQ (428 aa). Catalysis depends on for beta-ketoacyl synthase activity residues C611, H746, and H785. The interval 977–1265 is malonyl-CoA:ACP transacylase (MAT); the sequence is FGGQISRFVG…SSTITVMAGR (289 aa). The segment at 1384 to 1515 is N-terminal hotdog fold; sequence WEFVGYQDDE…ATVEMRSSSD (132 aa). A PKS/mFAS DH domain is found at 1384–1698; the sequence is WEFVGYQDDE…YMRVAKASMS (315 aa). Positions 1411-1696 are product template (PT) domain; sequence YVLSHVIAQT…VQYMRVAKAS (286 aa). H1415 (proton acceptor; for dehydratase activity) is an active-site residue. A C-terminal hotdog fold region spans residues 1550–1698; the sequence is VEVLQGRNVY…YMRVAKASMS (149 aa). The Proton donor; for dehydratase activity role is filled by D1607. The segment at 1734-1776 is disordered; sequence PEVRASSEPGAKVKASKTSKKEKKEKKPVTKAKSKSSKPSGWR. Positions 1747 to 1769 are enriched in basic residues; it reads KASKTSKKEKKEKKPVTKAKSKS. Residues 1776 to 1850 enclose the Carrier domain; the sequence is RDITEEVRNL…KFVQCVSNAL (75 aa). Position 1810 is an O-(pantetheine 4'-phosphoryl)serine (S1810). A disordered region spans residues 1853-1903; the sequence is PNAGPAEAEDDEDEEKSDNSSSESASESDDAGSESSDTGILTPTGEEEQPL. Positions 1859–1868 are enriched in acidic residues; the sequence is EAEDDEDEEK. The methyltransferase domain stretch occupies residues 2115 to 2294; sequence NLLAERIGRT…HVDWTDGNLP (180 aa). Residues 2360–2379 are disordered; that stretch reads SRAEKESGKTQAPHAAPGRR. The NADPH-binding domain stretch occupies residues 2387–2630; that stretch reads VTGATGSLGS…QWIPVDYCAA (244 aa).

It depends on pantetheine 4'-phosphate as a cofactor.

The catalysed reaction is (3E,5E,7S)-5,7-dimethyl-2-oxonona-3,5-dienyl-[ACP] + 4 malonyl-CoA + AH2 + S-adenosyl-L-methionine + 3 H(+) = 6-[(3E,5E,7S)-5,7-dimethyl-2-oxonona-3,5-dienyl]-2,4-dihydroxy-3-methylbenzaldehyde + holo-[ACP] + A + S-adenosyl-L-homocysteine + 4 CO2 + 4 CoA + H2O. It functions in the pathway secondary metabolite biosynthesis. Iterative polyketide synthase; part of the gene cluster that mediates the biosynthesis of asperfuranone, a probable antitumor agent. The polyketide synthase afoG is responsible for producing the 3,5-dimethyloctadienone moiety from acetyl-CoA, three malonyl-CoA, and two S-adenosyl methionines (SAM). The 3,5-dimethyloctadienone moiety is then loaded onto the SAT domain of afoE and extended with four malonyl-CoA and one SAM, which leads to the formation of 2,4-dihydroxy-6-(5,7-dimethyl-2-oxo-trans-3-trans-5-nonadienyl)-3-methylbenzaldehyde (compound 2) after reductive release and aldol condensation. AfoD is the next enzyme in the biosynthesis sequence and hydroxylates the side chain at the benzylic position of compound 2. After benzylic hydroxylation, a furan ring is formed after five-member ring hemiacetal formation and water elimination. AfoF and afoC are proposed to oxidize the R-diketone proton and to reduce the unconjugated carbonyl group, respectively, to generate asperfuranone. Since no intermediates could be isolated from afoF and afoC deletants, the sequence of these two enzymes is not fully understood. Moreover, since afoC deletant still produces a small amount of asperfuranone, other endogenous oxidoreductases might catalyze the same reaction with much less efficiency. In Emericella nidulans (strain FGSC A4 / ATCC 38163 / CBS 112.46 / NRRL 194 / M139) (Aspergillus nidulans), this protein is Iterative polyketide synthase afoE.